The following is a 209-amino-acid chain: Outer-membrane lipoprotein LolB (209 aa).

The signal sequence occupies residues 1–17 (MKKSTLLFSLMAMALSG). Residue C18 is the site of N-palmitoyl cysteine attachment. C18 is lipidated: S-diacylglycerol cysteine.

It belongs to the LolB family. Monomer.

The protein localises to the cell outer membrane. In terms of biological role, plays a critical role in the incorporation of lipoproteins in the outer membrane after they are released by the LolA protein. In Haemophilus ducreyi (strain 35000HP / ATCC 700724), this protein is Outer-membrane lipoprotein LolB.